Consider the following 430-residue polypeptide: uncharacterized protein (430 aa).

Helical transmembrane passes span 36 to 56 (LFVV…GVTV), 69 to 89 (AFAG…ALIV), 100 to 122 (TGLS…AAII), 126 to 148 (FLLF…ARYA), 160 to 180 (TAVS…PSLV), 197 to 217 (GPFI…FIML), 253 to 273 (IIVG…IMTM), 285 to 305 (LGAV…PSLV), 317 to 337 (AMAI…AFAP), 340 to 360 (SMIL…FGLI), 384 to 404 (VLIA…VAGS), and 406 to 426 (YLAL…VVVW).

Belongs to the major facilitator superfamily.

Its subcellular location is the cell membrane. This is an uncharacterized protein from Bacillus subtilis (strain 168).